The sequence spans 313 residues: tRNA dimethylallyltransferase (313 aa).

Residue 12 to 19 participates in ATP binding; that stretch reads GPTASGKS. Substrate is bound at residue 14 to 19; sequence TASGKS. Interaction with substrate tRNA regions lie at residues 37–40 and 161–165; these read DSMQ and QRSIR.

It belongs to the IPP transferase family. Monomer. Mg(2+) is required as a cofactor.

It catalyses the reaction adenosine(37) in tRNA + dimethylallyl diphosphate = N(6)-dimethylallyladenosine(37) in tRNA + diphosphate. In terms of biological role, catalyzes the transfer of a dimethylallyl group onto the adenine at position 37 in tRNAs that read codons beginning with uridine, leading to the formation of N6-(dimethylallyl)adenosine (i(6)A). This Pelagibacter ubique (strain HTCC1062) protein is tRNA dimethylallyltransferase.